The chain runs to 253 residues: uncharacterized protein (253 aa).

An N-terminal signal peptide occupies residues 1–16 (MCVVYRTSVLILLASG). A lipid anchor (N-palmitoyl cysteine) is attached at Cys-17. A lipid anchor (S-diacylglycerol cysteine) is attached at Cys-17.

This sequence belongs to the staphylococcal tandem lipoprotein family.

It is found in the cell membrane. This is an uncharacterized protein from Staphylococcus aureus (strain N315).